A 328-amino-acid polypeptide reads, in one-letter code: Tetraacyldisaccharide 4'-kinase (328 aa).

55 to 62 provides a ligand contact to ATP; that stretch reads TAGGNGKT.

This sequence belongs to the LpxK family.

The catalysed reaction is a lipid A disaccharide + ATP = a lipid IVA + ADP + H(+). It participates in glycolipid biosynthesis; lipid IV(A) biosynthesis; lipid IV(A) from (3R)-3-hydroxytetradecanoyl-[acyl-carrier-protein] and UDP-N-acetyl-alpha-D-glucosamine: step 6/6. Its function is as follows. Transfers the gamma-phosphate of ATP to the 4'-position of a tetraacyldisaccharide 1-phosphate intermediate (termed DS-1-P) to form tetraacyldisaccharide 1,4'-bis-phosphate (lipid IVA). The sequence is that of Tetraacyldisaccharide 4'-kinase from Shigella boydii serotype 18 (strain CDC 3083-94 / BS512).